A 583-amino-acid chain; its full sequence is Malonate--CoA ligase ACSF3, mitochondrial (583 aa).

Residues 1 to 27 constitute a mitochondrion transit peptide; it reads MPPHLALPFRRLFWSLASSQLIPRRHR. ATP-binding positions include 202-210, Asp-455, Arg-469, and Lys-561; that span reads TSGTTGRPK.

Belongs to the ATP-dependent AMP-binding enzyme family.

The protein localises to the mitochondrion. It carries out the reaction tetracosanoate + ATP + CoA = tetracosanoyl-CoA + AMP + diphosphate. The enzyme catalyses malonate + ATP + CoA = malonyl-CoA + AMP + diphosphate. Catalyzes the initial reaction in intramitochondrial fatty acid synthesis, by activating malonate and methylmalonate, but not acetate, into their respective CoA thioester. May have some preference toward very-long-chain substrates. The chain is Malonate--CoA ligase ACSF3, mitochondrial from Mus musculus (Mouse).